The chain runs to 122 residues: MARIAGVDLPRGKRVDIALTYIYGIGRTTALQILDVTGVDWSRNIDDLSADEVNEIRKELEQNHKVEGDLRREISSNIKRLMDIGCYRGLRHRRGLPVHGQRTHTNARTRKGPRRGAVGKKK.

Positions 95-122 are disordered; that stretch reads GLPVHGQRTHTNARTRKGPRRGAVGKKK.

Belongs to the universal ribosomal protein uS13 family. In terms of assembly, part of the 30S ribosomal subunit. Forms a loose heterodimer with protein S19. Forms two bridges to the 50S subunit in the 70S ribosome.

In terms of biological role, located at the top of the head of the 30S subunit, it contacts several helices of the 16S rRNA. In the 70S ribosome it contacts the 23S rRNA (bridge B1a) and protein L5 of the 50S subunit (bridge B1b), connecting the 2 subunits; these bridges are implicated in subunit movement. Contacts the tRNAs in the A and P-sites. The sequence is that of Small ribosomal subunit protein uS13 from Nitratidesulfovibrio vulgaris (strain DSM 19637 / Miyazaki F) (Desulfovibrio vulgaris).